The primary structure comprises 85 residues: Putative plasmid stability protein y4jJ (85 aa).

A compositionally biased stretch (basic and acidic residues) spans 66-78 (EAEHFNQLRDKTP). The interval 66–85 (EAEHFNQLRDKTPAEPMSFE) is disordered.

The protein to P.syringae pv tomato plasmid stability protein StbC.

Its function is as follows. Involved in plasmid stability. This is Putative plasmid stability protein y4jJ from Sinorhizobium fredii (strain NBRC 101917 / NGR234).